The chain runs to 809 residues: LPS-assembly protein LptD (809 aa).

The N-terminal stretch at 1 to 22 (MRRALRLLPLPLSIAICLPAMA) is a signal peptide.

It belongs to the LptD family. In terms of assembly, component of the lipopolysaccharide transport and assembly complex. Interacts with LptE and LptA.

Its subcellular location is the cell outer membrane. Together with LptE, is involved in the assembly of lipopolysaccharide (LPS) at the surface of the outer membrane. The chain is LPS-assembly protein LptD from Xanthomonas euvesicatoria pv. vesicatoria (strain 85-10) (Xanthomonas campestris pv. vesicatoria).